We begin with the raw amino-acid sequence, 309 residues long: Peptide methionine sulfoxide reductase MsrA/MsrB (309 aa).

A peptide methionine sulfoxide reductase A region spans residues 1 to 153; that stretch reads MIYLAEGCFW…PNGYCHIDIN (153 aa). The active site involves cysteine 8. The MsrB domain maps to 170–293; that stretch reads ATEIKAKLSA…NSLSITFIPK (124 aa). Cysteine 282 serves as the catalytic Nucleophile.

In the N-terminal section; belongs to the MsrA Met sulfoxide reductase family. This sequence in the C-terminal section; belongs to the MsrB Met sulfoxide reductase family.

The enzyme catalyses L-methionyl-[protein] + [thioredoxin]-disulfide + H2O = L-methionyl-(S)-S-oxide-[protein] + [thioredoxin]-dithiol. It carries out the reaction [thioredoxin]-disulfide + L-methionine + H2O = L-methionine (S)-S-oxide + [thioredoxin]-dithiol. The catalysed reaction is L-methionyl-[protein] + [thioredoxin]-disulfide + H2O = L-methionyl-(R)-S-oxide-[protein] + [thioredoxin]-dithiol. Functionally, has an important function as a repair enzyme for proteins that have been inactivated by oxidation. Catalyzes the reversible oxidation-reduction of methionine sulfoxide in proteins to methionine. This Streptococcus pyogenes serotype M3 (strain ATCC BAA-595 / MGAS315) protein is Peptide methionine sulfoxide reductase MsrA/MsrB (msrAB).